A 294-amino-acid chain; its full sequence is Acetylglutamate kinase (294 aa).

Substrate is bound by residues 60-61 (GG), arginine 82, and asparagine 186.

It belongs to the acetylglutamate kinase family. ArgB subfamily.

It localises to the cytoplasm. The catalysed reaction is N-acetyl-L-glutamate + ATP = N-acetyl-L-glutamyl 5-phosphate + ADP. Its pathway is amino-acid biosynthesis; L-arginine biosynthesis; N(2)-acetyl-L-ornithine from L-glutamate: step 2/4. Catalyzes the ATP-dependent phosphorylation of N-acetyl-L-glutamate. The sequence is that of Acetylglutamate kinase from Methanospirillum hungatei JF-1 (strain ATCC 27890 / DSM 864 / NBRC 100397 / JF-1).